The primary structure comprises 892 residues: Transmembrane channel-like protein 2-B (892 aa).

Residues 29 to 125 are disordered; that stretch reads GINQNLRREE…DESMSEGEMA (97 aa). Basic residues-rich tracts occupy residues 48 to 58 and 66 to 77; these read RRAKKRRMNRR and RSKKMRMRVRKN. Over residues 103–112 the composition is skewed to low complexity; that stretch reads PSSCSSSSDN. Helical transmembrane passes span 235–255, 275–295, 308–328, 403–423, 444–464, 482–502, 616–636, 671–691, and 736–756; these read LVLF…MGIP, FSVL…YGFY, LPLS…MVVI, LANV…YAVV, EVEI…EAIA, IFAL…DEVN, LIFN…LVGI, FYMG…IYSI, and GLII…LNAV. Residues 772–785 are compositionally biased toward basic and acidic residues; sequence QMQRDEEKNRRNNK. Disordered regions lie at residues 772–791 and 796–892; these read QMQR…TNQV and EDLL…PPRR. Positions 862-878 are enriched in pro residues; that stretch reads PRQPGPLPGNPRGPPPG.

The protein belongs to the TMC family. In adults, expression is restricted to the hair cells of inner ear and lateral line organ. Expressed at higher levels in the larval lateral-line neuromasts than in the larval inner ear.

It localises to the membrane. Probable component of the mechanotransducer (MET) non-selective cation channel. The protein is Transmembrane channel-like protein 2-B of Danio rerio (Zebrafish).